The following is a 191-amino-acid chain: MAEQVALSRTQVCGILREELYQGDAFHQSDTHIFIIMGASGDLAKKKIYPTIEPASFQRLNTHMNSLHHGAQANRLFYLALPPIVYEAVTKNIKETCMSQDVMQNHLLQMLCLVAMEKPASTNSDDVRDEKDELQEAWRIFTPLLHHIEREKTQPIPYVYGSRGPPEADELMKRVGFQYEGTYKWVNPHKL.

An N-acetylalanine modification is found at alanine 2. Position 8 is a phosphoserine (serine 8). Threonine 10 carries the post-translational modification Phosphothreonine. Residues 38–45 (GASGDLAK) and tyrosine 86 each bind NADP(+). Aspartate 101 is a D-glucose 6-phosphate binding site. Histidine 106 acts as the Proton acceptor in catalysis. An NADP(+)-binding site is contributed by arginine 163. Position 173 is an N6-acetyllysine (lysine 173). Residues tyrosine 179 and tryptophan 185 each contribute to the NADP(+) site. Tyrosine 179 bears the Phosphotyrosine mark.

It belongs to the glucose-6-phosphate dehydrogenase family. In terms of assembly, homotetramer; dimer of dimers. Interacts with SIRT2; the interaction is enhanced by H(2)O(2) treatment. Forms a ternary complex with ALDOB and TP53; this interaction is direct. ALDOB stabilizes the complex inhibiting G6PD activity and keeping oxidative pentose phosphate metabolism in check. Post-translationally, acetylated by ELP3; acetylation inhibits its homodimerization and enzyme activity. Deacetylated by SIRT2; deacetylation stimulates its enzyme activity.

Its subcellular location is the cytoplasm. The protein localises to the cytosol. It is found in the membrane. The catalysed reaction is D-glucose 6-phosphate + NADP(+) = 6-phospho-D-glucono-1,5-lactone + NADPH + H(+). It participates in carbohydrate degradation; pentose phosphate pathway; D-ribulose 5-phosphate from D-glucose 6-phosphate (oxidative stage): step 1/3. Its function is as follows. Cytosolic glucose-6-phosphate dehydrogenase that catalyzes the first and rate-limiting step of the oxidative branch within the pentose phosphate pathway/shunt, an alternative route to glycolysis for the dissimilation of carbohydrates and a major source of reducing power and metabolic intermediates for fatty acid and nucleic acid biosynthetic processes. The protein is Glucose-6-phosphate 1-dehydrogenase (G6PD) of Didelphis virginiana (North American opossum).